The sequence spans 406 residues: COP9 signalosome complex subunit 4 (406 aa).

Ala2 bears the N-acetylalanine mark. The residue at position 25 (Lys25) is an N6-acetyllysine. The PCI domain occupies 197–366 (YRRKFIEAAQ…GIVHFETREA (170 aa)).

It belongs to the CSN4 family. In terms of assembly, component of the CSN complex, composed of COPS1/GPS1, COPS2, COPS3, COPS4, COPS5, COPS6, COPS7 (COPS7A or COPS7B), COPS8 and COPS9. In the complex, it probably interacts directly with COPS1, COPS2, COPS3, COPS5, COPS6, COPS7 (COPS7A or COPS7B) and COPS8. Interacts with TOR1A; the interaction is direct and associates TOR1A and SNAPIN with the CSN complex. Interacts with STON2; controls STON2 neddylation levels. Interacts with ERCC6.

It localises to the cytoplasm. The protein localises to the nucleus. Its subcellular location is the cytoplasmic vesicle. The protein resides in the secretory vesicle. It is found in the synaptic vesicle. In terms of biological role, component of the COP9 signalosome complex (CSN), a complex involved in various cellular and developmental processes. The CSN complex is an essential regulator of the ubiquitin (Ubl) conjugation pathway by mediating the deneddylation of the cullin subunits of SCF-type E3 ligase complexes, leading to decrease the Ubl ligase activity of SCF-type complexes such as SCF, CSA or DDB2. Also involved in the deneddylation of non-cullin subunits such as STON2. The complex is also involved in phosphorylation of p53/TP53, c-jun/JUN, IkappaBalpha/NFKBIA, ITPK1, IRF8/ICSBP and SNAPIN, possibly via its association with CK2 and PKD kinases. CSN-dependent phosphorylation of TP53 and JUN promotes and protects degradation by the Ubl system, respectively. This is COP9 signalosome complex subunit 4 (COPS4) from Pongo abelii (Sumatran orangutan).